A 152-amino-acid polypeptide reads, in one-letter code: MAFVKLLVSIAITTAITIAVITTITNNTTTIREYTSFDAPSTPTIRPNRLLAQKEVGERNPNAADHCNRNPEICTPYGGGGSNSTMTCCNNKCIDVSSDDNNCGACKNKCKFSQTCCRGQCVYVAYDKRHCGQCNHPCELGEFCVYGLCNYA.

The first 19 residues, 1 to 19, serve as a signal peptide directing secretion; it reads MAFVKLLVSIAITTAITIA.

Belongs to the STIG1 family.

This Arabidopsis thaliana (Mouse-ear cress) protein is Stigma-specific STIG1-like protein 1.